The following is a 225-amino-acid chain: PKHD-type hydroxylase YbiX (225 aa).

A Fe2OG dioxygenase domain is found at 78 to 177 (TLSTPLFNRY…RVASFMWIQS (100 aa)). 3 residues coordinate Fe cation: His96, Asp98, and His158. Arg168 is a binding site for 2-oxoglutarate.

The cofactor is Fe(2+). It depends on L-ascorbate as a cofactor.

This is PKHD-type hydroxylase YbiX from Escherichia coli O8 (strain IAI1).